Here is a 196-residue protein sequence, read N- to C-terminus: MKESIAKVYRKTGETEIKSEINLYGEGKYDIKTGIGFFDHMLNLMARHGLIDVKLEAKGDLQVDSHHTVEDVGIVLGESFKKALGDKKGIKRYGTSFVPMDEALASVSIDISGRPYIVCDFNFTVDKLGEMDTELVEEFLRALAFNAGITLHARVLYGKNNHHMIEAVFKALGRALREAVDIDERINGVMSTKGTL.

This sequence belongs to the imidazoleglycerol-phosphate dehydratase family.

It is found in the cytoplasm. The enzyme catalyses D-erythro-1-(imidazol-4-yl)glycerol 3-phosphate = 3-(imidazol-4-yl)-2-oxopropyl phosphate + H2O. Its pathway is amino-acid biosynthesis; L-histidine biosynthesis; L-histidine from 5-phospho-alpha-D-ribose 1-diphosphate: step 6/9. This chain is Imidazoleglycerol-phosphate dehydratase, found in Clostridium botulinum (strain Langeland / NCTC 10281 / Type F).